A 127-amino-acid chain; its full sequence is MNQTIKVKKKKKTITLGVVHIRASFNNTIVTFTDIQGNTISSASAGGNGFKGARKATPYAAQVTIDKASEKAKECGLKTISIRIGGPGAQRESAMRALFGQNFVVTSILDVSSIAHNGVRPPKRRRV.

It belongs to the universal ribosomal protein uS11 family. In terms of assembly, part of the 30S ribosomal subunit. Interacts with proteins S7 and S18. Binds to IF-3.

In terms of biological role, located on the platform of the 30S subunit, it bridges several disparate RNA helices of the 16S rRNA. Forms part of the Shine-Dalgarno cleft in the 70S ribosome. The polypeptide is Small ribosomal subunit protein uS11 (Rickettsia prowazekii (strain Madrid E)).